Consider the following 351-residue polypeptide: Fe(3+) ions import ATP-binding protein FbpC (351 aa).

The 231-residue stretch at 7-237 (VVLKNVCKRF…PSSMFMANFM (231 aa)) folds into the ABC transporter domain. 39-46 (GPSGCGKT) is a binding site for ATP.

Belongs to the ABC transporter superfamily. Fe(3+) ion importer (TC 3.A.1.10) family. The complex is composed of two ATP-binding proteins (FbpC), two transmembrane proteins (FbpB) and a solute-binding protein (FbpA).

Its subcellular location is the cell inner membrane. The catalysed reaction is Fe(3+)(out) + ATP + H2O = Fe(3+)(in) + ADP + phosphate + H(+). Functionally, part of the ABC transporter complex FbpABC involved in Fe(3+) ions import. Responsible for energy coupling to the transport system. The chain is Fe(3+) ions import ATP-binding protein FbpC from Photobacterium profundum (strain SS9).